Here is a 144-residue protein sequence, read N- to C-terminus: Crossover junction endodeoxyribonuclease Hjc (144 aa).

Position 12 (Glu12) interacts with Mg(2+). Residue Ser32 is part of the active site. The Mg(2+) site is built by Asp42 and Glu55.

This sequence belongs to the Holliday junction resolvase Hjc family. In terms of assembly, homodimer; forms a 2:1 complex with Hel308 (Hjm). May form a complex with Holliday junction DNA, Hjc and Hjm. It depends on Mg(2+) as a cofactor.

It catalyses the reaction Endonucleolytic cleavage at a junction such as a reciprocal single-stranded crossover between two homologous DNA duplexes (Holliday junction).. Cleavage stimulated by PCNA123 and PCNA323 and by RadC2. In terms of biological role, a structure-specific endonuclease that resolves Holliday junction (HJ) intermediates during genetic recombination. Cleaves 4-way DNA junctions introducing paired nicks in opposing strands, leaving a 5'-terminal phosphate and a 3'-terminal hydroxyl group that are subsequently ligated to produce recombinant products. Inhibits the helicase activity of Hel308 (Hjm). The sequence is that of Crossover junction endodeoxyribonuclease Hjc from Sulfurisphaera tokodaii (strain DSM 16993 / JCM 10545 / NBRC 100140 / 7) (Sulfolobus tokodaii).